Here is a 925-residue protein sequence, read N- to C-terminus: Probable replication restart protein PriA (925 aa).

The Zn(2+) site is built by cysteine 645, cysteine 648, cysteine 654, cysteine 657, cysteine 672, cysteine 675, cysteine 685, and cysteine 688.

This sequence belongs to the helicase family. PriA subfamily. In terms of assembly, interacts with DnaB (DR_0549). Component of the replication restart primosome. The cofactor is Zn(2+).

Functionally, initiates the restart of stalled replication forks, which reloads the replicative helicase on sites other than the origin of replication. Recognizes abandoned replication forks and remodels them to uncover a helicase loading site. Promotes assembly of the primosome at these replication forks. Recognizes and binds DNA at stalled replication forks, also binds single-stranded (ss)DNA. This chain is Probable replication restart protein PriA, found in Deinococcus radiodurans (strain ATCC 13939 / DSM 20539 / JCM 16871 / CCUG 27074 / LMG 4051 / NBRC 15346 / NCIMB 9279 / VKM B-1422 / R1).